Consider the following 387-residue polypeptide: MNLHEYQAKDLLESYGLKVQKGIVAHNPNEAARAFDQLGGKFAVVKAQVHAGGRGKAGGVKVVKSSQEAREVAESLIGKNLVTFQTDAEGQPVNSVGVFEDVYPVTRELYLGAVVDRSSRKVTFMASTEGGVDIEEVAHNSPEKILKVEVDPLVGLQPFQAREVAFKLGLEGKQINDFVKTMLGAYKAFIECDFALFEINPLAVRENGEIVCVDGKINLDSNALYRHPKLLALRDKSQENAKELKASEHELNYVALEGNIGCMVNGAGLAMATMDIIQLYGGKPANFLDVGGGATKERVIEAFKLILDDENVKAVLINIFGGIVRCDMIAEAIIEAVKEVNVTVPVVVRLEGNNAEKGAKILADSGLKLIPADGLADAADKVVKSLG.

Residues 9 to 245 enclose the ATP-grasp domain; that stretch reads KDLLESYGLK…KSQENAKELK (237 aa). Residues Lys-46, 53–55, Glu-100, Tyr-103, and Glu-108 each bind ATP; that span reads GRG. Mg(2+) contacts are provided by Asn-200 and Asp-214. Residues Asn-265 and 322-324 contribute to the substrate site; that span reads GIV.

This sequence belongs to the succinate/malate CoA ligase beta subunit family. Heterotetramer of two alpha and two beta subunits. Requires Mg(2+) as cofactor.

The enzyme catalyses succinate + ATP + CoA = succinyl-CoA + ADP + phosphate. It catalyses the reaction GTP + succinate + CoA = succinyl-CoA + GDP + phosphate. It functions in the pathway carbohydrate metabolism; tricarboxylic acid cycle; succinate from succinyl-CoA (ligase route): step 1/1. Succinyl-CoA synthetase functions in the citric acid cycle (TCA), coupling the hydrolysis of succinyl-CoA to the synthesis of either ATP or GTP and thus represents the only step of substrate-level phosphorylation in the TCA. The beta subunit provides nucleotide specificity of the enzyme and binds the substrate succinate, while the binding sites for coenzyme A and phosphate are found in the alpha subunit. The polypeptide is Succinate--CoA ligase [ADP-forming] subunit beta (Francisella tularensis subsp. mediasiatica (strain FSC147)).